A 423-amino-acid polypeptide reads, in one-letter code: uncharacterized protein (423 aa).

This sequence belongs to the asfivirus E423R family.

It localises to the virion. This is an uncharacterized protein from African swine fever virus (isolate Pig/Kenya/KEN-50/1950) (ASFV).